The following is a 522-amino-acid chain: Maturase K (522 aa).

Belongs to the intron maturase 2 family. MatK subfamily.

The protein resides in the plastid. The protein localises to the chloroplast. Functionally, usually encoded in the trnK tRNA gene intron. Probably assists in splicing its own and other chloroplast group II introns. The protein is Maturase K of Iris orientalis (Yellowband iris).